We begin with the raw amino-acid sequence, 473 residues long: FAD-dependent oxidoreductase dpchF (473 aa).

The N-terminal stretch at 1–21 is a signal peptide; that stretch reads MKLSFIASPVWALALAQFAAA. 5 N-linked (GlcNAc...) asparagine glycosylation sites follow: asparagine 98, asparagine 128, asparagine 181, asparagine 262, and asparagine 330.

The protein belongs to the beta-cyclopiazonate dehydrogenase family. Requires FAD as cofactor.

It functions in the pathway secondary metabolite biosynthesis; terpenoid biosynthesis. In terms of biological role, FAD-dependent oxidoreductase; part of the gene cluster that mediates the biosynthesis of the diterpenoid pyrones higginsianins A and B. The first step of the pathway is the synthesis of the alpha-pyrone moiety by the polyketide synthase dpchA via condensation of one acetyl-CoA starter unit with 3 malonyl-CoA units and 2 methylations. The alpha-pyrone is then combined with geranylgeranyl pyrophosphate (GGPP) formed by the GGPP synthase dpchD through the action of the prenyltransferase dpchC to yield a linear alpha-pyrone diterpenoid. Subsequent steps in the diterpenoid pyrone biosynthetic pathway involve the decalin core formation, which is initiated by the epoxidation of the C10-C11 olefin by the FAD-dependent oxidoreductase dpchE, and is followed by a cyclization cascade catalyzed by the terpene cyclase dpchB. The short chain dehydrogenase/reductase dpchG then oxidizes the 8S hydroxy group to a ketone and the short chain dehydrogenase/reductase dpchH reduces the ketone to the 8R hydroxy group to yield higginsianin B. Finally, the FAD-dependent oxidoreductase dpchF converts higginsianin B into higginsianin A. This chain is FAD-dependent oxidoreductase dpchF, found in Colletotrichum higginsianum (strain IMI 349063) (Crucifer anthracnose fungus).